Here is a 409-residue protein sequence, read N- to C-terminus: MNKPKKVAILTAGGLAPCLNSAIGSLIERYTEIDPSIEIICYRGGYKGLLLGDSYPVTAEVRKKAGVLQRFGGSVIGNSRVKLTNVKDCVKRGLVKEGEDPQKVAADQLVKDGVDILHTIGGDDTNTAAADLAAFLARNNYGLTVIGLPKTVDNDVFPIKQSLGAWTAAEQGARYFMNVVAENNANPRMLIVHEVMGRNCGWLTAATAQEYRKLLDRAEWLPELGLTRESYEVHAVFVPEMAIDLEAEAKRLREVMDKVDCVNIFVSEGAGVEAIVAEMQAKGQEVPRDAFGHIKLDAVNPGKWFGEQFAQMIGAEKTLVQKSGYFARASASNVDDMRLIKSCADLAVECAFRRESGVIGHDEDNGNVLRAIEFPRIKGGKPFNIDTDWFNSMLSEIGQPKGGKVEVSH.

A diphosphate-binding site is contributed by G14. D123 contacts Mg(2+). Residues 151-153 (TVD), 196-198 (MGR), E268, and 325-328 (YFAR) each bind substrate. D153 (proton acceptor) is an active-site residue.

It belongs to the phosphofructokinase type A (PFKA) family. PPi-dependent PFK group II subfamily. Clade 'P' sub-subfamily. As to quaternary structure, homodimer. It depends on Mg(2+) as a cofactor.

The protein resides in the cytoplasm. It catalyses the reaction beta-D-fructose 6-phosphate + diphosphate = beta-D-fructose 1,6-bisphosphate + phosphate + H(+). It functions in the pathway carbohydrate degradation; glycolysis; D-glyceraldehyde 3-phosphate and glycerone phosphate from D-glucose: step 3/4. Its activity is regulated as follows. Non-allosteric. Catalyzes the phosphorylation of D-fructose 6-phosphate, the first committing step of glycolysis. Uses inorganic phosphate (PPi) as phosphoryl donor instead of ATP like common ATP-dependent phosphofructokinases (ATP-PFKs), which renders the reaction reversible, and can thus function both in glycolysis and gluconeogenesis. Consistently, PPi-PFK can replace the enzymes of both the forward (ATP-PFK) and reverse (fructose-bisphosphatase (FBPase)) reactions. The chain is Pyrophosphate--fructose 6-phosphate 1-phosphotransferase from Methylomonas methanica.